The following is a 543-amino-acid chain: Germacrene A synthase (543 aa).

Positions 296, 300, 439, and 447 each coordinate Mg(2+). The DDXXD motif signature appears at 296–300 (DDTYD).

This sequence belongs to the terpene synthase family. Tpsa subfamily. Mg(2+) serves as cofactor. It depends on Mn(2+) as a cofactor. Barely detectable in leaves.

It is found in the plastid. Its subcellular location is the chloroplast. It carries out the reaction (2E,6E)-farnesyl diphosphate = germacrene A + diphosphate. The catalysed reaction is (2E,6E)-farnesyl diphosphate = (1S,2S,4R)-beta-elemene + diphosphate. The protein operates within secondary metabolite biosynthesis; terpenoid biosynthesis. Its function is as follows. Sesquiterpene synthase involved in the biosynthesis of volatile compounds widely used in aromatherapy and folk medicine, and present in culinary herbs. Mediates the conversion of (2E,6E)-farnesyl diphosphate (FPP) into germacrene A and beta-elemene. Not able to use (2E)-geranyl diphosphate (GPP) as substrate. The chain is Germacrene A synthase from Lavandula viridis (Green lavender).